Reading from the N-terminus, the 312-residue chain is tRNA uridine(34) hydroxylase (312 aa).

The Rhodanese domain maps to 130-225 (RGDEVVFFDG…YGEQFGNKGL (96 aa)). Cys185 acts as the Cysteine persulfide intermediate in catalysis.

This sequence belongs to the TrhO family.

It catalyses the reaction uridine(34) in tRNA + AH2 + O2 = 5-hydroxyuridine(34) in tRNA + A + H2O. Its function is as follows. Catalyzes oxygen-dependent 5-hydroxyuridine (ho5U) modification at position 34 in tRNAs. The polypeptide is tRNA uridine(34) hydroxylase (Corynebacterium glutamicum (strain R)).